The chain runs to 816 residues: Protein EFR3 homolog B (816 aa).

The span at 206-219 (SGEGTESRSPSPLQ) shows a compositional bias: polar residues. The disordered stretch occupies residues 206–230 (SGEGTESRSPSPLQASEKEKESPAE). The span at 221–230 (SEKEKESPAE) shows a compositional bias: basic and acidic residues.

It belongs to the EFR3 family. As to quaternary structure, component of a phosphatidylinositol 4-kinase (PI4K) complex. Palmitoylated at its N-terminus, anchoring the protein to the plasma membrane.

It is found in the cell membrane. Its function is as follows. Component of a complex required to localize phosphatidylinositol 4-kinase (PI4K) to the plasma membrane. The complex acts as a regulator of phosphatidylinositol 4-phosphate (PtdIns(4)P) synthesis. In the complex, efr3b probably acts as the membrane-anchoring component. This chain is Protein EFR3 homolog B (efr3b), found in Danio rerio (Zebrafish).